The following is a 281-amino-acid chain: Ras-related protein Rab-40C (281 aa).

Ser-23, Gly-26, Lys-27, and Ser-46 together coordinate GTP. Residues Ser-41 to Ile-49 are switch-I. 2 residues coordinate Mg(2+): Ser-46 and Asp-69. GTP-binding residues include Gly-72, Asn-126, and Arg-127. A switch-II region spans residues Gly-72–Gln-88. Residues Leu-175–Ala-228 enclose the SOCS box domain. Residues Ser-245–Ser-281 are disordered. Residues Pro-270–Ser-281 show a composition bias toward polar residues. Residue Cys-273 is the site of S-palmitoyl cysteine attachment. Residue Cys-278 is the site of S-geranylgeranyl cysteine attachment.

It belongs to the small GTPase superfamily. Rab family. In terms of assembly, component of the cullin-5-RING E3 ubiquitin-protein ligase complex (ECS(RAB40C) complex) composed of CUL5, Elongin BC (ELOB and ELOC), RNF7/RBX2 and RAB40C. Interacts with protein phosphatase 6 (PP6) complex components ANKRD28, ANKRD52, PPP6C, PP6R1 and PP6R2; the interaction leads to ANKRD28 ubiquitination and decreased PP6 activity. Interacts with DAB2IP; DAB2IP acts as a GAP for RAB40C. It depends on Mg(2+) as a cofactor.

The protein localises to the cell membrane. It is found in the cytoplasm. It localises to the cytosol. Its subcellular location is the golgi apparatus membrane. The catalysed reaction is GTP + H2O = GDP + phosphate + H(+). Its pathway is protein modification; protein ubiquitination. Its activity is regulated as follows. Regulated by guanine nucleotide exchange factors (GEFs) which promote the exchange of bound GDP for free GTP. Regulated by GTPase activating proteins (GAPs) including DAB2IP, which increase the GTP hydrolysis activity. Inhibited by GDP dissociation inhibitors (GDIs). RAB40C small GTPase acts as substrate-recognition component of the ECS(RAB40C) E3 ubiquitin ligase complex which mediates the ubiquitination and subsequent proteasomal degradation of target proteins. The Rab40 subfamily belongs to the Rab family that are key regulators of intracellular membrane trafficking, from the formation of transport vesicles to their fusion with membranes. Rabs cycle between an inactive GDP-bound form and an active GTP-bound form that is able to recruit to membranes different sets of downstream effectors directly responsible for vesicle formation, movement, tethering and fusion. As part of the ECS(RAB40C) complex, mediates ANKRD28 ubiquitination and degradation, thereby inhibiting protein phosphatase 6 (PP6) complex activity and focal adhesion assembly during cell migration. Also negatively regulate lipid droplets accumulation in a GTP-dependent manner. This is Ras-related protein Rab-40C from Mus musculus (Mouse).